A 133-amino-acid chain; its full sequence is Large ribosomal subunit protein bL19 (133 aa).

Residues 114–133 (IAERQMTAASKEEPAEKSEA) form a disordered region. Positions 123-133 (SKEEPAEKSEA) are enriched in basic and acidic residues.

It belongs to the bacterial ribosomal protein bL19 family.

In terms of biological role, this protein is located at the 30S-50S ribosomal subunit interface and may play a role in the structure and function of the aminoacyl-tRNA binding site. This Phenylobacterium zucineum (strain HLK1) protein is Large ribosomal subunit protein bL19.